Reading from the N-terminus, the 956-residue chain is DNA polymerase I (956 aa).

A 5'-3' exonuclease domain is found at 209-296 (VTVRQWVDYR…VTDLPLDIEF (88 aa)).

It belongs to the DNA polymerase type-A family. As to quaternary structure, single-chain monomer with multiple functions.

It catalyses the reaction DNA(n) + a 2'-deoxyribonucleoside 5'-triphosphate = DNA(n+1) + diphosphate. In terms of biological role, a DNA polymerase, required for DNA repair after DNA damage induced by ionizing radiation (IR); this is not the major DNA polymerase. Following severe irradiation (7 kGy of gamma irradiation) genomic DNA is fragmented. DNA is progressively degraded for the first 1.5 hours after IR, in a step promoted by RecA and counterbalanced by DNA Pol I and Pol III, followed by massive DNA synthesis and genome reassembly in the next hour. Optimal priming of DNA synthesis requires both RecA and RadA, Pol III initiates DNA synthesis while both Pol I and Pol III are required for its continuation. May also have 5'-3' exonuclease activity. This is DNA polymerase I (polA) from Deinococcus radiodurans (strain ATCC 13939 / DSM 20539 / JCM 16871 / CCUG 27074 / LMG 4051 / NBRC 15346 / NCIMB 9279 / VKM B-1422 / R1).